Consider the following 148-residue polypeptide: MTARRVVATGTFDILHPGHVYYLTESRKLGDELWVIVARDENVKHKPRPILPEAQRLAMVSALRPVDHAILGDHTDMFCPIDDIRPAVITIGFNQYFDEEKLKGQLAERNLPAEVVRIGKYEDGDLASSRMIVQRIVEARGSGDQRIG.

ATP-binding positions include 11-12, 16-19, N94, and Y121; these read TF and HPGH.

This sequence belongs to the archaeal FAD synthase family. In terms of assembly, homodimer. It depends on a divalent metal cation as a cofactor.

It carries out the reaction FMN + ATP + H(+) = FAD + diphosphate. It participates in cofactor biosynthesis; FAD biosynthesis; FAD from FMN: step 1/1. Its function is as follows. Catalyzes the transfer of the AMP portion of ATP to flavin mononucleotide (FMN) to produce flavin adenine dinucleotide (FAD) coenzyme. This chain is FAD synthase, found in Methanoregula boonei (strain DSM 21154 / JCM 14090 / 6A8).